Here is a 129-residue protein sequence, read N- to C-terminus: Transcriptional activator protein (129 aa).

Residues 1–12 (MRSSSPSQPPSI) show a composition bias toward low complexity. The tract at residues 1 to 21 (MRSSSPSQPPSIKKAHRQAKR) is disordered. A Nuclear localization signal motif is present at residues 13 to 28 (KKAHRQAKRRAIRRRR). A zinc finger spans residues 33–50 (CGCSIYFHIDCTGHGFTH). The segment at 84-114 (IHQNEDIPCTNTVQPQPEESVASPQSLPELP) is disordered. Over residues 92–109 (CTNTVQPQPEESVASPQS) the composition is skewed to polar residues. Residues 115 to 129 (SLDDFDDSFWVNLFK) are transactivation.

It belongs to the geminiviridae transcriptional activator protein family. Monomer. Homodimer. Homooligomer. Self-interaction correlates with nuclear localization and efficient activation of transcription. Monomers suppress local silencing by interacting with and inactivating host adenosine kinase 2 (ADK2) in the cytoplasm. Interacts with and inhibits host SNF1 kinase. Binds to ssDNA. In terms of processing, phosphorylated.

The protein localises to the host nucleus. Its subcellular location is the host cytoplasm. Functionally, strong activator of the late viral genes promoters. Enhances the expression of the capsid protein and nuclear shuttle protein. Acts as a suppressor of RNA-mediated gene silencing, also known as post-transcriptional gene silencing (PTGS), a mechanism of plant viral defense that limits the accumulation of viral RNAs. Suppresses the host RNA silencing by inhibiting adenosine kinase 2 (ADK2), a kinase involved in a general methylation pathway. Also suppresses the host basal defense by interacting with and inhibiting SNF1 kinase, a key regulator of cell metabolism implicated in innate antiviral defense. Determines pathogenicity. This chain is Transcriptional activator protein, found in Abutilon (Upland cotton).